Here is a 411-residue protein sequence, read N- to C-terminus: Tyrosine--tRNA ligase (411 aa).

Residue tyrosine 34 participates in L-tyrosine binding. The 'HIGH' region motif lies at cysteine 39 to serine 48. Residues tyrosine 171 and glutamine 175 each coordinate L-tyrosine. The 'KMSKS' region motif lies at lysine 231–threonine 235. Residue lysine 234 coordinates ATP. Positions isoleucine 345–valine 411 constitute an S4 RNA-binding domain.

This sequence belongs to the class-I aminoacyl-tRNA synthetase family. TyrS type 1 subfamily. Homodimer.

It localises to the cytoplasm. It carries out the reaction tRNA(Tyr) + L-tyrosine + ATP = L-tyrosyl-tRNA(Tyr) + AMP + diphosphate + H(+). Catalyzes the attachment of tyrosine to tRNA(Tyr) in a two-step reaction: tyrosine is first activated by ATP to form Tyr-AMP and then transferred to the acceptor end of tRNA(Tyr). This Rickettsia typhi (strain ATCC VR-144 / Wilmington) protein is Tyrosine--tRNA ligase.